A 489-amino-acid chain; its full sequence is Occludin (489 aa).

The Cytoplasmic segment spans residues 1–51 (MMYEKRSYTGYGHPSSHYDYPPPSGPPGSFYLADVPPQHFYQWRSPPGIVR). The region spanning 45–248 (SPPGIVRILQ…ICYFAQKTRH (204 aa)) is the MARVEL domain. A helical membrane pass occupies residues 52 to 74 (ILQGSVVILCLVIFACVASTLAW). Over 75–112 (EYYGSGGLLGYGGGLGSYYNGYYGGYNGYYYGGLTNPR) the chain is Extracellular. A helical membrane pass occupies residues 113–137 (AANGFMIAMAVLCFLVTLGLVIAGL). Residues 138-147 (SKASGARSRR) lie on the Cytoplasmic side of the membrane. Residues 148–172 (FYLLVAVLSGLLAFVMLIASIVYVV) traverse the membrane as a helical segment. At 173–222 (GVNPRAGLGASSGSLYYNQMLMLCNQMMSPVAGGIMNQYLYHYCMVDPQE) the chain is on the extracellular side. Residues Cys196 and Cys216 are joined by a disulfide bond. Residues 223–244 (AVAIVCGFLTVILLCVICYFAQ) traverse the membrane as a helical segment. Residues 245–489 (KTRHKIWKYG…MVGGYDQSRS (245 aa)) are Cytoplasmic-facing. Ser280 is modified (phosphoserine). At Thr285 the chain carries Phosphothreonine. Residue Ser300 is modified to Phosphoserine. Residues 308 to 382 (PAQENGYGHS…ESSGEQNRDD (75 aa)) are disordered. The segment covering 322–332 (PSVPPPEGPSP) has biased composition (pro residues). The segment covering 345–354 (PARRGHRQRP) has biased composition (basic residues). 2 positions are modified to phosphotyrosine: Tyr364 and Tyr368. Residues 365-377 (ETDYTTAAESSGE) show a composition bias toward polar residues. 2 positions are modified to phosphothreonine; by PKC/PRKCH: Thr369 and Thr370. Residue Ser374 is modified to Phosphoserine. In terms of domain architecture, OCEL spans 381–489 (DDWASLYPPI…MVGGYDQSRS (109 aa)). The stretch at 407-434 (LQRYKALCAEMDDIGTQLRQLSHELDCL) forms a coiled coil. Position 457 is a phosphoserine (Ser457).

Belongs to the ELL/occludin family. As to quaternary structure, interacts with TJP1/ZO1. Interacts with VAPA. Interacts with CLDN1, CLDN6, CLDN9, CLDN11, CLDN12 and CLDN17. Interacts with PLSCR1. Interacts with LSR, ILDR1 and ILDR2. Interacts with TJP2/ZO2. Post-translationally, dephosphorylated by PTPRJ. Localized at tight junctions of both epithelial and endothelial cells.

The protein localises to the cell membrane. It is found in the cell junction. Its subcellular location is the tight junction. In terms of biological role, may play a role in the formation and regulation of the tight junction (TJ) paracellular permeability barrier. This is Occludin (OCLN) from Potorous tridactylus (Potoroo).